A 230-amino-acid polypeptide reads, in one-letter code: Flagellar L-ring protein (230 aa).

The first 22 residues, 1 to 22 (MSPISNFARIALACTVAALLGG), serve as a signal peptide directing secretion. Cys23 carries the N-palmitoyl cysteine lipid modification. Cys23 is lipidated: S-diacylglycerol cysteine.

Belongs to the FlgH family. The basal body constitutes a major portion of the flagellar organelle and consists of four rings (L,P,S, and M) mounted on a central rod.

It localises to the cell outer membrane. It is found in the bacterial flagellum basal body. Its function is as follows. Assembles around the rod to form the L-ring and probably protects the motor/basal body from shearing forces during rotation. The protein is Flagellar L-ring protein of Stenotrophomonas maltophilia (strain K279a).